A 184-amino-acid polypeptide reads, in one-letter code: uncharacterized protein (184 aa).

Positions 1–20 (MKKQILALVCGVIFSSSTWA) are cleaved as a signal peptide.

It to E.coli YtfJ.

It is found in the periplasm. This is an uncharacterized protein from Haemophilus influenzae (strain ATCC 51907 / DSM 11121 / KW20 / Rd).